The primary structure comprises 510 residues: Probable cytosol aminopeptidase (510 aa).

2 residues coordinate Mn(2+): Lys254 and Asp259. Residue Lys266 is part of the active site. Positions 277, 336, and 338 each coordinate Mn(2+). Arg340 is an active-site residue. Positions Ala487–Ala510 are disordered.

This sequence belongs to the peptidase M17 family. Mn(2+) is required as a cofactor.

The protein resides in the cytoplasm. It carries out the reaction Release of an N-terminal amino acid, Xaa-|-Yaa-, in which Xaa is preferably Leu, but may be other amino acids including Pro although not Arg or Lys, and Yaa may be Pro. Amino acid amides and methyl esters are also readily hydrolyzed, but rates on arylamides are exceedingly low.. The enzyme catalyses Release of an N-terminal amino acid, preferentially leucine, but not glutamic or aspartic acids.. Its function is as follows. Presumably involved in the processing and regular turnover of intracellular proteins. Catalyzes the removal of unsubstituted N-terminal amino acids from various peptides. The polypeptide is Probable cytosol aminopeptidase (Polaromonas naphthalenivorans (strain CJ2)).